We begin with the raw amino-acid sequence, 541 residues long: Synaptotagmin-1 (541 aa).

The Extracellular portion of the chain corresponds to 1–11 (MGFFSTILGFC). Residues 12-32 (GFGVGISLGLVIGYVLFVYLL) traverse the membrane as a helical segment. Residues 33 to 541 (PNDVKDPEIR…QIELEWRTAS (509 aa)) are Cytoplasmic-facing. One can recognise an SMP-LTD domain in the interval 67 to 249 (DFDRVDWINR…WPKTLVVPIL (183 aa)). The phospholipid binding stretch occupies residues 227–509 (QEQIKDQVAN…TLGYVDIPVV (283 aa)). 2 consecutive C2 domains span residues 240–362 (WPKT…AFTL) and 401–521 (GFEE…NQKF). Positions 276, 282, 332, and 334 each coordinate Ca(2+).

This sequence belongs to the synaptotagmin family. Interacts with cabbage leaf curl virus (CaLCuV) BC1 protein and tobacco mosaic virus (TMV) MP protein. Interacts with ROSY1. Ca(2+) is required as a cofactor. As to expression, expressed in roots, shoots, rosette and cauline leaves, inflorescences, and siliques. In roots, expressed in vascular bundle, epidermis, the differential zone of the tips of root hairs, and the quiescent center and columella of root tips.

It is found in the cell membrane. The protein resides in the endosome membrane. Plays an important role in maintaining plasma membrane integrity during freezing and osmotic stresses. May function in membrane resealing during calcium-dependent freezing tolerance. May regulate endocytosis and endosome recycling at the plasma membrane and cell-to-cell trafficking of cabbage leaf curl virus (CaLCuV) and tobacco mosaic virus (TMV) movement proteins via plasmodesmata. The protein is Synaptotagmin-1 (SYT1) of Arabidopsis thaliana (Mouse-ear cress).